The primary structure comprises 153 residues: Ribosome maturation factor RimP (153 aa).

Belongs to the RimP family.

It is found in the cytoplasm. Required for maturation of 30S ribosomal subunits. This Synechococcus elongatus (strain ATCC 33912 / PCC 7942 / FACHB-805) (Anacystis nidulans R2) protein is Ribosome maturation factor RimP.